A 790-amino-acid polypeptide reads, in one-letter code: cAMP and cAMP-inhibited cGMP 3',5'-cyclic phosphodiesterase 10A (790 aa).

Residues 290-291, 334-335, T368, Q387, and H519 each bind 3',5'-cyclic AMP; these read RC and IA. The PDEase domain maps to 446-763; it reads TSEEWQGLMR…NQWEKVIRGE (318 aa). H519 functions as the Proton donor in the catalytic mechanism. 3',5'-cyclic GMP is bound at residue H519. A divalent metal cation contacts are provided by H523, H557, D558, and D668. Q720 is a binding site for 3',5'-cyclic AMP. Residue Q720 participates in 3',5'-cyclic GMP binding. Residues 768–790 are disordered; that stretch reads WISGPGPAPSKSTPEKLNVKVED. Basic and acidic residues predominate over residues 780 to 790; sequence TPEKLNVKVED.

This sequence belongs to the cyclic nucleotide phosphodiesterase family. Homodimer. A divalent metal cation is required as a cofactor. As to expression, detected in striatum (at protein level). Detected in testis and brain.

It is found in the cytoplasm. The protein resides in the cytosol. It carries out the reaction a nucleoside 3',5'-cyclic phosphate + H2O = a nucleoside 5'-phosphate + H(+). It catalyses the reaction 3',5'-cyclic AMP + H2O = AMP + H(+). The enzyme catalyses 3',5'-cyclic GMP + H2O = GMP + H(+). It functions in the pathway purine metabolism; 3',5'-cyclic AMP degradation; AMP from 3',5'-cyclic AMP: step 1/1. It participates in purine metabolism; 3',5'-cyclic GMP degradation; GMP from 3',5'-cyclic GMP: step 1/1. In terms of biological role, plays a role in signal transduction by regulating the intracellular concentration of cyclic nucleotides. Can hydrolyze both cAMP and cGMP, but has higher affinity for cAMP and is more efficient with cAMP as substrate. May play a critical role in regulating cAMP and cGMP levels in the striatum, a region of the brain that contributes to the control of movement and cognition. This is cAMP and cAMP-inhibited cGMP 3',5'-cyclic phosphodiesterase 10A (Pde10a) from Mus musculus (Mouse).